The following is an 88-amino-acid chain: UPF0297 protein Bcer98_3100 (88 aa).

It belongs to the UPF0297 family.

The sequence is that of UPF0297 protein Bcer98_3100 from Bacillus cytotoxicus (strain DSM 22905 / CIP 110041 / 391-98 / NVH 391-98).